The sequence spans 61 residues: Protein transport protein Sec61 subunit beta (61 aa).

The Cytoplasmic segment spans residues 1 to 35 (MKRPSTQRAPATVNKGGNSMMKFYSEDAIGLKVGP). Residues 36–56 (TAVLFMSLIFIAFVIILHIMG) form a helical membrane-spanning segment. Over 57–61 (KYTRS) the chain is Extracellular.

This sequence belongs to the SEC61-beta family. As to quaternary structure, the SEC61 channel-forming translocon complex.

The protein resides in the endoplasmic reticulum membrane. Functionally, component of SEC61 channel-forming translocon complex that mediates transport of signal peptide-containing precursor polypeptides across the endoplasmic reticulum (ER). Forms a ribosome receptor and a gated pore in the ER membrane, both functions required for cotranslational translocation of nascent polypeptides. This chain is Protein transport protein Sec61 subunit beta (sec61b), found in Dictyostelium discoideum (Social amoeba).